The following is a 274-amino-acid chain: Beta-lactamase OXA-9 (274 aa).

The first 24 residues, 1–24, serve as a signal peptide directing secretion; that stretch reads MKKILLLHMLVFVSATLPISSVAS. Residue Ser58 is the Acyl-ester intermediate of the active site. N6-carboxylysine is present on Lys61. 206–208 contacts substrate; sequence KSG.

It belongs to the class-D beta-lactamase family.

It carries out the reaction a beta-lactam + H2O = a substituted beta-amino acid. In terms of biological role, oxacillin-hydrolyzing beta-lactamase. Confers resistance to beta-lactam antibiotics but at a significantly lower level than the TEM bla gene product. This is Beta-lactamase OXA-9 (bla) from Klebsiella aerogenes (Enterobacter aerogenes).